Reading from the N-terminus, the 266-residue chain is Probable septum site-determining protein MinC (266 aa).

The interval 98–146 (ILKGGRPVSDVDVPKVEPESPPAEEKKKTGKATKASGKSDEIGETDSPQ) is disordered. Basic and acidic residues predominate over residues 109-124 (DVPKVEPESPPAEEKK).

The protein belongs to the MinC family. As to quaternary structure, interacts with MinD and FtsZ.

Functionally, cell division inhibitor that blocks the formation of polar Z ring septums. Rapidly oscillates between the poles of the cell to destabilize FtsZ filaments that have formed before they mature into polar Z rings. Prevents FtsZ polymerization. The polypeptide is Probable septum site-determining protein MinC (Allorhizobium ampelinum (strain ATCC BAA-846 / DSM 112012 / S4) (Agrobacterium vitis (strain S4))).